Here is a 469-residue protein sequence, read N- to C-terminus: tRNA(Ile)-lysidine synthase (469 aa).

Ser26–Ser31 lines the ATP pocket.

It belongs to the tRNA(Ile)-lysidine synthase family.

It is found in the cytoplasm. It carries out the reaction cytidine(34) in tRNA(Ile2) + L-lysine + ATP = lysidine(34) in tRNA(Ile2) + AMP + diphosphate + H(+). Its function is as follows. Ligates lysine onto the cytidine present at position 34 of the AUA codon-specific tRNA(Ile) that contains the anticodon CAU, in an ATP-dependent manner. Cytidine is converted to lysidine, thus changing the amino acid specificity of the tRNA from methionine to isoleucine. This Shouchella clausii (strain KSM-K16) (Alkalihalobacillus clausii) protein is tRNA(Ile)-lysidine synthase.